The chain runs to 2813 residues: von Willebrand factor (2813 aa).

Residues 1–22 (MIPARFAGVLLALALILPGTLC) form the signal peptide. The 169-residue stretch at 33–201 (ARCSLFGSDF…ALSSGEQWCE (169 aa)) folds into the VWFD 1 domain. Disulfide bonds link C35–C162 and C57–C200. N-linked (GlcNAc...) asparagine glycosylation is found at N99, N156, and N211. One can recognise a TIL 1 domain in the interval 295–348 (CPAGMEYRQCVSPCARTCQSLHINEMCQERCVDGCSCPEGQLLDEGLCVESTEC). Residues 386–560 (GECLVTGQSH…NAWKLHGDCQ (175 aa)) enclose the VWFD 2 domain. 3 disulfide bridges follow: C388–C524, C410–C559, and C432–C440. 2 TIL domains span residues 652–707 (CPKG…KAQC) and 776–827 (CPAD…LERC). N666 carries N-linked (GlcNAc...) asparagine glycosylation. An amino-terminal region spans residues 764-787 (SLSCRPPMVKLVCPADNLRAEGLE). Intrachain disulfides connect C767/C808, C776/C804, and C810/C821. The tract at residues 788–833 (CTKTCQNYDLECMSMGCVSGCLCPPGMVRHENRCVALERCPCFHQG) is E1. Residues 826–853 (RCPCFHQGKEYAPGETVKIGCNTCVCQD) form a CX region. An N-linked (GlcNAc...) asparagine glycan is attached at N857. A VWFD 3 domain is found at 865–1032 (ATCSTIGMAH…NSWKVSSQCA (168 aa)). 8 disulfide bridges follow: C867/C996, C889/C1031, C898/C993, C914/C921, C1060/C1084, C1071/C1111, C1089/C1091, and C1126/C1130. One can recognise a TIL 4 domain in the interval 1146–1196 (YNSCAPACQVTCQHPEPLACPVQCVEGCHAHCPPGKILDELLQTCVDPEDC). An N-linked (GlcNAc...) asparagine; atypical glycan is attached at N1147. 3 disulfide bridges follow: C1149–C1169, C1153–C1165, and C1196–C1199. N1231 carries N-linked (GlcNAc...) asparagine glycosylation. The cysteines at positions 1234 and 1237 are disulfide-linked. O-linked (GalNAc...) threonine glycans are attached at residues T1248, T1255, and T1256. Residue S1263 is glycosylated (O-linked (GalNAc...) serine). A disulfide bridge links C1272 with C1458. A VWFA 1; binding site for platelet glycoprotein Ib domain is found at 1277–1453 (DLVFLLDGSS…DELEQQRDEI (177 aa)). O-linked (GalNAc...) threonine glycans are attached at residues T1468 and T1477. An O-linked (GalNAc...) serine glycan is attached at S1486. T1487 is a glycosylation site (O-linked (GalNAc...) threonine). The 168-residue stretch at 1498-1665 (DVAFVLEGSD…TLPREAPDLV (168 aa)) folds into the VWFA 2 domain. Residue N1515 is glycosylated (N-linked (GlcNAc...) (complex) asparagine). An N-linked (GlcNAc...) asparagine glycan is attached at N1574. A disulfide bridge links C1669 with C1670. T1679 carries O-linked (GalNAc...) threonine glycosylation. 7 cysteine pairs are disulfide-bonded: C1686-C1872, C1879-C1904, C1899-C1940, C1927-C2088, C1950-C2085, C1972-C2123, and C1993-C2001. In terms of domain architecture, VWFA 3; main binding site for collagens type I and III spans 1691–1871 (DVILLLDGSS…TLGNSFLHKL (181 aa)). In terms of domain architecture, VWFD 4 spans 1948-2124 (CVCTGSSTRH…TVQRPGQTCQ (177 aa)). The interval 2216-2261 (CPRHCDGNVSSCGDHPSEGCFCPPDKVMLEGSCVPEEACTQCIGED) is E2. 2 N-linked (GlcNAc...) asparagine glycosylation sites follow: N2223 and N2290. The 74-residue stretch at 2255–2328 (TQCIGEDGVQ…CCPEYECVCD (74 aa)) folds into the VWFC 1 domain. The O-linked (GalNAc...) threonine glycan is linked to T2298. 2 N-linked (GlcNAc...) asparagine glycosylation sites follow: N2357 and N2400. Positions 2429 to 2495 (KVCVHRSTIY…HEGECCGRCL (67 aa)) constitute a VWFC 2 domain. Positions 2507-2509 (RGD) match the Cell attachment site motif. 2 N-linked (GlcNAc...) asparagine glycosylation sites follow: N2546 and N2585. Residues 2580-2645 (EACMLNGTVI…NTGECCGRCL (66 aa)) enclose the VWFC 3 domain. Intrachain disulfides connect C2724–C2774, C2739–C2788, C2750–C2804, and C2754–C2806. The region spanning 2724 to 2812 (CNDITARLQY…ECKCSPRKCS (89 aa)) is the CTCK domain. N-linked (GlcNAc...) asparagine glycosylation is present at N2790.

Multimeric. Interacts with F8. In terms of processing, all cysteine residues are involved in intrachain or interchain disulfide bonds. Post-translationally, N- and O-glycosylated. As to expression, plasma.

It is found in the secreted. Its subcellular location is the extracellular space. The protein resides in the extracellular matrix. Functionally, important in the maintenance of hemostasis, it promotes adhesion of platelets to the sites of vascular injury by forming a molecular bridge between sub-endothelial collagen matrix and platelet-surface receptor complex GPIb-IX-V. Also acts as a chaperone for coagulation factor VIII, delivering it to the site of injury, stabilizing its heterodimeric structure and protecting it from premature clearance from plasma. The sequence is that of von Willebrand factor (VWF) from Homo sapiens (Human).